A 296-amino-acid chain; its full sequence is Nicotinate dehydrogenase FAD-subunit (296 aa).

Positions 1 to 179 (MKDFEFFAPK…TEVIIDRPDA (179 aa)) constitute an FAD-binding PCMH-type domain. FAD-binding positions include 29–36 (IIAGGTDL), Gly101, 110–114 (TIGGN), Asp123, Arg160, Met169, and Lys187.

Heterooctamer of NDHM, NDHL, NDHS and NDHF. Dimer of heterotetramers. FAD serves as cofactor.

The enzyme catalyses nicotinate + NADP(+) + H2O = 6-hydroxynicotinate + NADPH + H(+). It functions in the pathway cofactor degradation; nicotinate degradation; 6-hydroxynicotinate from nicotinate: step 1/1. Reversibly inactivated by selenide and sulfide. Not inhibited by cyanide. Its function is as follows. Catalyzes the hydroxylation of nicotinate to 6-hydroxynicotinate. Also active against 2-pyrazinecarboxylic acid, but inactive against other nicotinate analogs. This is Nicotinate dehydrogenase FAD-subunit (ndhF) from Eubacterium barkeri (Clostridium barkeri).